The following is a 54-amino-acid chain: U-myrmicitoxin(01)-Tb5a (54 aa).

The first 26 residues, 1 to 26, serve as a signal peptide directing secretion; that stretch reads MQLSHLLLAFAMIFVMTIMYAPQVQA. The propeptide occupies 27–38; sequence DAWADANADADV.

The protein belongs to the formicidae venom precursor-01 superfamily. Contains 1 disulfide bond. In terms of tissue distribution, expressed by the venom gland.

The protein localises to the secreted. This chain is U-myrmicitoxin(01)-Tb5a, found in Tetramorium bicarinatum (Tramp ant).